A 302-amino-acid chain; its full sequence is Capsid protein (302 aa).

The tract at residues 217-302 (FHSGDAAKQS…HSSPQQTPKK (86 aa)) is disordered. The segment covering 254 to 271 (PRAGTPSSQKSGQSGQTT) has biased composition (low complexity). Polar residues predominate over residues 288 to 302 (HKSTPHSSPQQTPKK).

The protein resides in the virion. In terms of biological role, capsid protein self-assembles to form a flexuous, filamentous capsid (Potential). The capsid encapsulates the single-stranded RNA genome. The chain is Capsid protein from Botryotinia fuckeliana (Noble rot fungus).